Consider the following 285-residue polypeptide: Aquaporin PIP2-5 (285 aa).

Transmembrane regions (helical) follow at residues 38–58 and 75–95; these read AVIAEFVATLLFLYITVATVI and CGGVGVLGIAWAFGGMIFILV. An NPA 1 motif is present at residues 107–109; that stretch reads NPA. A run of 3 helical transmembrane segments spans residues 126 to 146, 168 to 188, and 202 to 222; these read LLYIVAQCLGAICGVGLVKGF, GTGLAAEIIGTFVLVYTVFSA, and VLAPLPIGFAVFMVHLATIPI. An NPA 2 motif is present at residues 228–230; it reads NPA. The helical transmembrane segment at 250 to 270 threads the bilayer; that stretch reads IFWVGPFIGAAIAAAYHQYVL.

Belongs to the MIP/aquaporin (TC 1.A.8) family. PIP (TC 1.A.8.11) subfamily. Homomers. May interact with PIP1-2 to form heteromers. As to expression, specifically expressed in roots, in the exodermis, endodermis and xylem parenchyma. Polar localization to the external periclinal side of epidermal cells in root apices.

Its subcellular location is the cell membrane. In terms of biological role, water channel required to facilitate the transport of water across cell membrane. Its function is impaired by Hg(2+). May play a role in water uptake from the root surface. Active as homomers. Increased activity when heteromerization with PIP1-2. This is Aquaporin PIP2-5 (PIP2-5) from Zea mays (Maize).